We begin with the raw amino-acid sequence, 191 residues long: Transmembrane protein 17B (191 aa).

Transmembrane regions (helical) follow at residues 50 to 70 (MSLYFNMWFFPFWWISEVVML), 83 to 103 (FILITILIVMTLIEAIRLYLG), 115 to 135 (LAGFWLLTFLLQFPLILFQLF), and 147 to 167 (GVHIILALFIFAEVLFGFVAL).

Belongs to the TMEM17 family. Part of the tectonic-like complex (also named B9 complex).

It localises to the cell projection. The protein resides in the cilium membrane. Its function is as follows. Transmembrane component of the tectonic-like complex, a complex localized at the transition zone of primary cilia and acting as a barrier that prevents diffusion of transmembrane proteins between the cilia and plasma membranes. Required for ciliogenesis and sonic hedgehog/SHH signaling. This is Transmembrane protein 17B (Tmem17b) from Danio rerio (Zebrafish).